The sequence spans 501 residues: Ribose import ATP-binding protein RbsA (501 aa).

ABC transporter domains lie at 5–241 (LELK…VGRK) and 249–495 (LNLP…VGKQ). 37-44 (GENGAGKS) provides a ligand contact to ATP.

Belongs to the ABC transporter superfamily. Ribose importer (TC 3.A.1.2.1) family. As to quaternary structure, the complex is composed of an ATP-binding protein (RbsA), two transmembrane proteins (RbsC) and a solute-binding protein (RbsB).

The protein localises to the cell inner membrane. It catalyses the reaction D-ribose(out) + ATP + H2O = D-ribose(in) + ADP + phosphate + H(+). Part of the ABC transporter complex RbsABC involved in ribose import. Responsible for energy coupling to the transport system. This Photorhabdus laumondii subsp. laumondii (strain DSM 15139 / CIP 105565 / TT01) (Photorhabdus luminescens subsp. laumondii) protein is Ribose import ATP-binding protein RbsA.